Consider the following 672-residue polypeptide: Penicillin-binding protein activator LpoA (672 aa).

Positions methionine 1–glycine 26 are cleaved as a signal peptide. The N-palmitoyl cysteine moiety is linked to residue cysteine 27. Cysteine 27 carries the S-diacylglycerol cysteine lipid modification. Positions alanine 298–proline 336 are disordered. Polar residues predominate over residues glutamine 305–alanine 322. Low complexity predominate over residues glutamine 327–proline 336.

Belongs to the LpoA family. In terms of assembly, interacts with PBP1a.

The protein localises to the cell outer membrane. Functionally, regulator of peptidoglycan synthesis that is essential for the function of penicillin-binding protein 1A (PBP1a). The sequence is that of Penicillin-binding protein activator LpoA from Pectobacterium parmentieri (strain WPP163) (Pectobacterium wasabiae (strain WPP163)).